Consider the following 273-residue polypeptide: Small ribosomal subunit protein uS3 (273 aa).

Positions 43-111 (IRQLMSTGME…QVQLNILEVK (69 aa)) constitute a KH type-2 domain. Over residues 218 to 227 (QQAAAAPSRG) the composition is skewed to low complexity. The interval 218–273 (QQAAAAPSRGRAGDRPGRPGGDRRRRNDRPAAEAAPAAVEAPAAEAAAPAAEGGQA) is disordered. The span at 228 to 239 (RAGDRPGRPGGD) shows a compositional bias: basic and acidic residues. The segment covering 249–273 (AEAAPAAVEAPAAEAAAPAAEGGQA) has biased composition (low complexity).

The protein belongs to the universal ribosomal protein uS3 family. Part of the 30S ribosomal subunit. Forms a tight complex with proteins S10 and S14.

Its function is as follows. Binds the lower part of the 30S subunit head. Binds mRNA in the 70S ribosome, positioning it for translation. This Paenarthrobacter aurescens (strain TC1) protein is Small ribosomal subunit protein uS3.